The primary structure comprises 913 residues: Alanine--tRNA ligase (913 aa).

4 residues coordinate Zn(2+): histidine 608, histidine 612, cysteine 711, and histidine 715.

It belongs to the class-II aminoacyl-tRNA synthetase family. It depends on Zn(2+) as a cofactor.

It is found in the cytoplasm. The enzyme catalyses tRNA(Ala) + L-alanine + ATP = L-alanyl-tRNA(Ala) + AMP + diphosphate. Its function is as follows. Catalyzes the attachment of alanine to tRNA(Ala) in a two-step reaction: alanine is first activated by ATP to form Ala-AMP and then transferred to the acceptor end of tRNA(Ala). Also edits incorrectly charged Ser-tRNA(Ala) and Gly-tRNA(Ala) via its editing domain. This chain is Alanine--tRNA ligase, found in Methanocorpusculum labreanum (strain ATCC 43576 / DSM 4855 / Z).